The chain runs to 241 residues: DnaA regulatory inactivator Hda (241 aa).

This sequence belongs to the DnaA family. HdA subfamily. As to quaternary structure, the active form seems to be an ADP-bound monomer. Forms the RIDA complex (regulatory inactivation of DnaA) of ATP-DnaA, ADP-Hda and the DNA-loaded beta sliding clamp (dnaN).

In terms of biological role, mediates the interaction of DNA replication initiator protein DnaA with DNA polymerase subunit beta sliding clamp (dnaN). Stimulates hydrolysis of ATP-DnaA to ADP-DnaA, rendering DnaA inactive for reinitiation, a process called regulatory inhibition of DnaA or RIDA. The protein is DnaA regulatory inactivator Hda of Salmonella agona (strain SL483).